We begin with the raw amino-acid sequence, 136 residues long: TBK1 inhibitor DP96R (136 aa).

Residues 66-86 (NNALEKPAGANNIPEKSAGRM) are disordered.

It belongs to the asfivirus DP96R family.

Its function is as follows. Inhibits cGAS-STING-mediated type I IFN expression and NF-kB activation by inhibiting TBK1 and IKBKB/IKKB. Inhibits host TBK1 phosphorylation. In Ornithodoros (relapsing fever ticks), this protein is TBK1 inhibitor DP96R.